Here is a 320-residue protein sequence, read N- to C-terminus: Beta-ketoacyl-[acyl-carrier-protein] synthase III (320 aa).

Catalysis depends on residues C113 and H247. Positions 248-252 (QANRR) are ACP-binding. N277 is a catalytic residue.

This sequence belongs to the thiolase-like superfamily. FabH family. As to quaternary structure, homodimer.

It localises to the cytoplasm. The enzyme catalyses malonyl-[ACP] + acetyl-CoA + H(+) = 3-oxobutanoyl-[ACP] + CO2 + CoA. It functions in the pathway lipid metabolism; fatty acid biosynthesis. Functionally, catalyzes the condensation reaction of fatty acid synthesis by the addition to an acyl acceptor of two carbons from malonyl-ACP. Catalyzes the first condensation reaction which initiates fatty acid synthesis and may therefore play a role in governing the total rate of fatty acid production. Possesses both acetoacetyl-ACP synthase and acetyl transacylase activities. Its substrate specificity determines the biosynthesis of branched-chain and/or straight-chain of fatty acids. The protein is Beta-ketoacyl-[acyl-carrier-protein] synthase III of Acidiphilium cryptum (strain JF-5).